The primary structure comprises 334 residues: Ribosomal RNA small subunit methyltransferase H (334 aa).

S-adenosyl-L-methionine contacts are provided by residues Gly39 to His41, Asp59, Phe83, Asp100, and Gln107. The interval Glu303–Pro334 is disordered.

It belongs to the methyltransferase superfamily. RsmH family.

Its subcellular location is the cytoplasm. It catalyses the reaction cytidine(1402) in 16S rRNA + S-adenosyl-L-methionine = N(4)-methylcytidine(1402) in 16S rRNA + S-adenosyl-L-homocysteine + H(+). Specifically methylates the N4 position of cytidine in position 1402 (C1402) of 16S rRNA. The protein is Ribosomal RNA small subunit methyltransferase H of Verminephrobacter eiseniae (strain EF01-2).